A 148-amino-acid chain; its full sequence is Deoxyuridine 5'-triphosphate nucleotidohydrolase (148 aa).

Substrate-binding positions include 68-70 (RSG), Asn-81, 85-87 (TID), and Lys-95.

This sequence belongs to the dUTPase family. The cofactor is Mg(2+).

It carries out the reaction dUTP + H2O = dUMP + diphosphate + H(+). Its pathway is pyrimidine metabolism; dUMP biosynthesis; dUMP from dCTP (dUTP route): step 2/2. Its function is as follows. This enzyme is involved in nucleotide metabolism: it produces dUMP, the immediate precursor of thymidine nucleotides and it decreases the intracellular concentration of dUTP so that uracil cannot be incorporated into DNA. The polypeptide is Deoxyuridine 5'-triphosphate nucleotidohydrolase (Rickettsia rickettsii (strain Iowa)).